We begin with the raw amino-acid sequence, 114 residues long: Iron-sulfur cluster insertion protein ErpA (114 aa).

Iron-sulfur cluster is bound by residues C42, C106, and C108.

The protein belongs to the HesB/IscA family. As to quaternary structure, homodimer. Iron-sulfur cluster serves as cofactor.

Its function is as follows. Required for insertion of 4Fe-4S clusters for at least IspG. The protein is Iron-sulfur cluster insertion protein ErpA of Buchnera aphidicola subsp. Acyrthosiphon pisum (strain APS) (Acyrthosiphon pisum symbiotic bacterium).